Reading from the N-terminus, the 1557-residue chain is Ras guanine nucleotide exchange factor K (1557 aa).

Residues 1 to 16 show a composition bias toward pro residues; that stretch reads MEPTINPPVNLPPPVP. Disordered regions lie at residues 1-121, 146-181, 195-238, 283-347, 558-619, and 881-937; these read MEPT…SYTV, VETL…KLSV, LYQQ…SPQL, SPLP…GLTP, NNNN…DELS, and TNNN…QVNH. Low complexity-rich tracts occupy residues 17-40, 52-63, 73-90, 102-114, 148-161, 195-207, and 222-236; these read SRSN…NNTN, SSPSSPSSPSPS, NNNN…NGNV, ISSP…HTSS, TLSS…KTTT, LYQQ…NPNS, and PPSS…STSP. A compositionally biased stretch (pro residues) spans 283–310; that stretch reads SPLPPPPLTIPNKVPPLPMRLPPPPPPQ. Coiled coils occupy residues 310-338 and 591-629; these read QQLD…SNST and NNNN…EEEL. Positions 311–333 are enriched in low complexity; the sequence is QLDQMYSNNNQQQQQQQQQQQNN. Residues 334 to 343 show a composition bias toward polar residues; sequence ESNSTTTSEG. Composition is skewed to low complexity over residues 558 to 610 and 881 to 928; these read NNNN…NNNN and TNNN…TPTT. Residues 1058–1177 form the N-terminal Ras-GEF domain; the sequence is LNAEIDAATL…QIRNCILKRT (120 aa). Residues 1254-1303 are disordered; sequence PSISQNTPSSPSLIPSSPRPITSSSSVSSSTLLKSPLSQQAKSRIPETKT. The segment covering 1261–1291 has biased composition (low complexity); that stretch reads PSSPSLIPSSPRPITSSSSVSSSTLLKSPLS. Positions 1316 to 1549 constitute a Ras-GEF domain; it reads DDEEIARQLT…YHLSLLKEPR (234 aa).

Its function is as follows. Promotes the exchange of Ras-bound GDP by GTP. This chain is Ras guanine nucleotide exchange factor K (gefK), found in Dictyostelium discoideum (Social amoeba).